Here is a 289-residue protein sequence, read N- to C-terminus: Rhodopsin (289 aa).

Over 1–7 (YLVNPAA) the chain is Extracellular. Residues 8–32 (YAALGAYMFLLILIGFPVNFLTLYV) traverse the membrane as a helical segment. At 33 to 44 (TIEHKKLRTPLN) the chain is on the cytoplasmic side. A helical membrane pass occupies residues 45-67 (YILLNLAVANLFMVLGGFTTTMY). Residues 68 to 81 (TSMHGYFVLGRLGC) lie on the Extracellular side of the membrane. Cysteine 81 and cysteine 158 are oxidised to a cystine. Residues 82–104 (NLEGFFATMGGEIALWSLVVLAI) traverse the membrane as a helical segment. The 'Ionic lock' involved in activated form stabilization motif lies at 105–107 (ERW). The Cytoplasmic segment spans residues 105–123 (ERWIVVCKPISNFRFTEDH). The helical transmembrane segment at 124–144 (AIMGLAFTWVMALSCAVPPLV) threads the bilayer. At 145–173 (GWSRYIPEGMQCSCGVDYYTRAEGFNNES) the chain is on the extracellular side. An N-linked (GlcNAc...) asparagine glycan is attached at asparagine 171. A helical transmembrane segment spans residues 174 to 195 (FVIYMFIVHFLTPLIIISFCYG). Residues 196 to 223 (RLLCAVKEAAAAQQESETTQRAEREVSR) lie on the Cytoplasmic side of the membrane. A helical transmembrane segment spans residues 224–245 (MVVMMVISFLMCWLPYASVAWY). The Extracellular segment spans residues 246–257 (IFCNQGSEFGPI). The chain crosses the membrane as a helical span at residues 258–279 (FMTLPAFFAKSSAIYNPLIYIC). Lysine 267 is subject to N6-(retinylidene)lysine. The Cytoplasmic portion of the chain corresponds to 280 to 289 (MNKQFRHCMI).

Belongs to the G-protein coupled receptor 1 family. Opsin subfamily. In terms of processing, phosphorylated on some or all of the serine and threonine residues present in the C-terminal region. Contains one covalently linked retinal chromophore.

The protein localises to the membrane. It localises to the cell projection. It is found in the cilium. Its subcellular location is the photoreceptor outer segment. Functionally, photoreceptor required for image-forming vision at low light intensity. While most salt water fish species use retinal as chromophore, most freshwater fish use 3-dehydroretinal, or a mixture of retinal and 3-dehydroretinal. Light-induced isomerization of 11-cis to all-trans retinal triggers a conformational change that activates signaling via G-proteins. Subsequent receptor phosphorylation mediates displacement of the bound G-protein alpha subunit by arrestin and terminates signaling. This Cottocomephorus inermis (Longfin Baikal sculpin) protein is Rhodopsin (rho).